Reading from the N-terminus, the 144-residue chain is Interleukin-9 (144 aa).

Residues 1–18 form the signal peptide; that stretch reads MLVTYILASVLLFSSVLG. Pyrrolidone carboxylic acid is present on glutamine 19. 4 N-linked (GlcNAc...) asparagine glycosylation sites follow: asparagine 50, asparagine 78, asparagine 101, and asparagine 114.

The protein belongs to the IL-7/IL-9 family. Interacts with IL9R. Interacts with IL2RG.

It localises to the secreted. Functionally, multifunctional cytokine secreted mainly by T-helper 2 lymphocytes and also mast cells or NKT cells that plays important roles in the immune response against parasites. Affects intestinal epithelial permeability and adaptive immunity. In addition, induces the differentiation of specific T-cell subsets such as IL-17 producing helper T-cells (TH17) and also proliferation and differentiation of mast cells. Mechanistically, exerts its biological effects through a receptor composed of IL9R subunit and a signal transducing subunit IL2RG. Receptor stimulation results in the rapid activation of JAK1 and JAK3 kinase activities leading to STAT1, STAT3 and STAT5-mediated transcriptional programs. Induction of differentiation genes seems to be mediated by STAT1 alone, while protection of cells from apoptosis depends on STAT3 and STAT5. This chain is Interleukin-9 (Il9), found in Mus musculus (Mouse).